A 253-amino-acid polypeptide reads, in one-letter code: MPAAIRALIAGNWKMNGLKAQLAEFEAMLAGAPALADKADLLVCPPATLLHAFGQKLGNGARSFAVGAQDCHANVSGAHTGDLSAEMLVDAGASAIIVGHSERRADHGETDSVVRAKAEAAWRAGAVAIVCVGETQAERDAGQTLDVVGRQLAGSLPDGATAENTVVAYEPVWAIGTGLTPTANDVEQVHKFIRDCLTKRFGGEGAAVRILYGGSVKPSNAKELMAVPEVNGALVGGASLKAADFLAIAAGCP.

Substrate is bound at residue 12 to 14 (NWK). Catalysis depends on histidine 100, which acts as the Electrophile. Glutamate 170 acts as the Proton acceptor in catalysis. Residues glycine 176, serine 215, and 236–237 (GG) contribute to the substrate site.

It belongs to the triosephosphate isomerase family. As to quaternary structure, homodimer.

It is found in the cytoplasm. It carries out the reaction D-glyceraldehyde 3-phosphate = dihydroxyacetone phosphate. It functions in the pathway carbohydrate biosynthesis; gluconeogenesis. It participates in carbohydrate degradation; glycolysis; D-glyceraldehyde 3-phosphate from glycerone phosphate: step 1/1. Its function is as follows. Involved in the gluconeogenesis. Catalyzes stereospecifically the conversion of dihydroxyacetone phosphate (DHAP) to D-glyceraldehyde-3-phosphate (G3P). In Rhodopseudomonas palustris (strain BisA53), this protein is Triosephosphate isomerase.